An 83-amino-acid polypeptide reads, in one-letter code: RNA-binding protein Hfq (83 aa).

The Sm domain maps to 9–69 (DYFLNQLRKD…ISTFAPARNV (61 aa)).

The protein belongs to the Hfq family. In terms of assembly, homohexamer.

RNA chaperone that binds small regulatory RNA (sRNAs) and mRNAs to facilitate mRNA translational regulation in response to envelope stress, environmental stress and changes in metabolite concentrations. Also binds with high specificity to tRNAs. This is RNA-binding protein Hfq from Exiguobacterium sibiricum (strain DSM 17290 / CCUG 55495 / CIP 109462 / JCM 13490 / 255-15).